Reading from the N-terminus, the 179-residue chain is MTTLKEMYEKEIVPGLKETFGYKNPMEVPKLDKIVLNIGLGEAINNVKLLDSAVEDLALIAGQRPVITKAKKSIAAFKLREGMPIGCMVTLRREKMYDFLLKLINITLPRVRDFRGISGKAFDGHGNYSLGIKEHIIFPEIDFDQTDSIKGLNVSIVTTAKTDKEGKELLKQFGMPFKN.

This sequence belongs to the universal ribosomal protein uL5 family. In terms of assembly, part of the 50S ribosomal subunit; part of the 5S rRNA/L5/L18/L25 subcomplex. Contacts the 5S rRNA and the P site tRNA. Forms a bridge to the 30S subunit in the 70S ribosome.

This is one of the proteins that bind and probably mediate the attachment of the 5S RNA into the large ribosomal subunit, where it forms part of the central protuberance. In the 70S ribosome it contacts protein S13 of the 30S subunit (bridge B1b), connecting the 2 subunits; this bridge is implicated in subunit movement. Contacts the P site tRNA; the 5S rRNA and some of its associated proteins might help stabilize positioning of ribosome-bound tRNAs. This Desulforapulum autotrophicum (strain ATCC 43914 / DSM 3382 / VKM B-1955 / HRM2) (Desulfobacterium autotrophicum) protein is Large ribosomal subunit protein uL5.